Reading from the N-terminus, the 493-residue chain is Angiopoietin-related protein 2 (493 aa).

The signal sequence occupies residues 1–22 (MRPLCVTCWWLGLLAAMGAVAG). 2 coiled-coil regions span residues 76–115 (PEVLLENRVHKQELELLNNELLKQKRQIETLQQLVEVDGG) and 152–206 (ALEL…HCQR). 2 N-linked (GlcNAc...) asparagine glycosylation sites follow: Asn164 and Asn192. The Fibrinogen C-terminal domain maps to 269–489 (DKPSGPWRDC…KVVMMIRPNP (221 aa)). Intrachain disulfides connect Cys278-Cys307 and Cys430-Cys443.

Post-translationally, N-glycosylated. As to expression, widely expressed in heart, small intestine, spleen and stomach. Also found in lower levels in colon, ovary, adrenal gland, skeletal muscle and in prostate.

Its subcellular location is the secreted. Induces sprouting in endothelial cells through an autocrine and paracrine action. This Homo sapiens (Human) protein is Angiopoietin-related protein 2 (ANGPTL2).